Consider the following 34-residue polypeptide: Subtilosin-A (34 aa).

Positions 1–34 (NKGCATCSIGIACLVDGPIPDFECAGATGLGLWG) form a cross-link, cyclopeptide (Asn-Gly). A cross-link (2-cysteinyl-D-allo-threonine (Cys-Thr)) is located at residues 7–28 (CSIGIACLVDGPIPDFECAGAT). The 2-cysteinyl-L-phenylalanine (Cys-Phe) cross-link spans 13-22 (CLVDGPIPDF).

The protein belongs to the bacteriocin class V family. Alpha-amino of Asn-1 is covalently linked with the carboxyl of Gly-34 to form a cyclopeptide. Thioether cross-links are formed between cysteines and the alpha-carbons of other amino acids, Cys-7 to Thr-28 and Cys-13 to Phe-22. In forming this cross-link, Thr-28 is converted to D-amino acid.

It is found in the secreted. In terms of biological role, has bactericidal activity against some Gram-positive bacteria. The protein is Subtilosin-A of Cytobacillus firmus (Bacillus firmus).